The primary structure comprises 1707 residues: Kinesin-like protein KIF1A (1707 aa).

A Kinesin motor domain is found at 5-354; that stretch reads SVKVAVRVRP…LRYADRAKQI (350 aa). 5 residues coordinate ATP: glycine 102, lysine 103, serine 104, tyrosine 105, and serine 215. Serine 104 provides a ligand contact to Mg(2+). Residues 439-466 adopt a coiled-coil conformation; the sequence is SEEAIERLKETEKIIAELNETWEEKLRR. The region spanning 525–581 is the FHA domain; that stretch reads TRVGREDAERRQDIVLSGHFIKEEHCIFRSDSRGGGEAVVTLEPCEGADTYVNGKKV. 2 coiled-coil regions span residues 637-671 and 811-831; these read EKQG…LLEQ and LEKL…AAEV. Residues 657 to 1105 are required for interaction with CALM1, PPFIA2 and TANC2; sequence QYRREREEAT…LCKDVLSPLR (449 aa). 2 disordered regions span residues 1424–1462 and 1536–1576; these read PVPE…EVPN and TDVR…EKEP. Residues 1429 to 1453 show a composition bias toward low complexity; it reads LSPASSEDSESRSSSGASSPLSAEG. Positions 1592–1690 constitute a PH domain; sequence IVSKKGYLHF…WLYAFNPLLA (99 aa).

The protein belongs to the TRAFAC class myosin-kinesin ATPase superfamily. Kinesin family. Unc-104 subfamily. Dimeric motor; dimerization is required for ATP-driven processive motility. Monomer in vitro. Interacts with PPFIA1 and PPFIA4. Interacts with CALM1; the interaction is increased in presence of calcium and increases neuronal dense core vesicles motility. Interacts with PPFIA2 and TANC2; both interactions allow the recruitment of neuronal dense core vesicles to dendritic spines and decrease in presence of calcium. Interacts with SYT4 (unphosphorylated) and SYT11; both interactions increase in presence of calcium. Interacts with MADD.

It is found in the cytoplasm. It localises to the cytoskeleton. The protein localises to the cell projection. Its subcellular location is the neuron projection. The protein resides in the axon. It is found in the perinuclear region. It localises to the synapse. The protein localises to the cytoplasmic vesicle. Its subcellular location is the secretory vesicle. The protein resides in the neuronal dense core vesicle membrane. It carries out the reaction ATP + H2O + a kinesin associated with a microtubule at position (n) = ADP + phosphate a kinesin associated with a microtubule at position (n+1, toward the plus end).. Kinesin motor with a plus-end-directed microtubule motor activity, involved in anterograde axonal transport of synaptic vesicle precursors. Also required for neuronal dense core vesicles (DCVs) transport to the dendritic spines and axons. The interaction calcium-dependent with CALM1 increases vesicle motility and interaction with the scaffolding proteins PPFIA2 and TANC2 recruits DCVs to synaptic sites. This is Kinesin-like protein KIF1A from Rattus norvegicus (Rat).